We begin with the raw amino-acid sequence, 976 residues long: DNA-directed RNA polymerase 1, mitochondrial (976 aa).

Residues 1–42 constitute a mitochondrion transit peptide; sequence MWRNILGRASLRKVKFLSDSSSSGTHYPVNRVRGILSSVNLS. Active-site residues include Asp-677, Lys-752, and Asp-909.

Belongs to the phage and mitochondrial RNA polymerase family.

It localises to the mitochondrion. The catalysed reaction is RNA(n) + a ribonucleoside 5'-triphosphate = RNA(n+1) + diphosphate. Functionally, DNA-dependent RNA polymerase catalyzes the transcription of DNA into RNA using the four ribonucleoside triphosphates as substrates. The protein is DNA-directed RNA polymerase 1, mitochondrial (RPOT1) of Arabidopsis thaliana (Mouse-ear cress).